We begin with the raw amino-acid sequence, 463 residues long: Argininosuccinate lyase (463 aa).

It belongs to the lyase 1 family. Argininosuccinate lyase subfamily.

It localises to the cytoplasm. It carries out the reaction 2-(N(omega)-L-arginino)succinate = fumarate + L-arginine. It functions in the pathway amino-acid biosynthesis; L-arginine biosynthesis; L-arginine from L-ornithine and carbamoyl phosphate: step 3/3. The sequence is that of Argininosuccinate lyase from Thermosynechococcus vestitus (strain NIES-2133 / IAM M-273 / BP-1).